The chain runs to 549 residues: Glutamyl-tRNA(Gln) amidotransferase subunit B, mitochondrial (549 aa).

Residues 1 to 23 (MLRISRDTKIVARVTHVTKSRTY) constitute a mitochondrion transit peptide.

Belongs to the GatB/GatE family. GatB subfamily. In terms of assembly, subunit of the heterotrimeric GatFAB amidotransferase (AdT) complex, composed of A, B and F subunits.

The protein localises to the mitochondrion. The enzyme catalyses L-glutamyl-tRNA(Gln) + L-glutamine + ATP + H2O = L-glutaminyl-tRNA(Gln) + L-glutamate + ADP + phosphate + H(+). Allows the formation of correctly charged Gln-tRNA(Gln) through the transamidation of misacylated Glu-tRNA(Gln) in the mitochondria. The reaction takes place in the presence of glutamine and ATP through an activated gamma-phospho-Glu-tRNA(Gln). The protein is Glutamyl-tRNA(Gln) amidotransferase subunit B, mitochondrial of Yarrowia lipolytica (strain CLIB 122 / E 150) (Yeast).